The chain runs to 231 residues: ADP-ribose pyrophosphatase (231 aa).

At Phe2 the chain carries N-acetylserine. Residues Trp46, Trp64 to Asp65, Arg69, and Arg103 contribute to the substrate site. One can recognise a Nudix hydrolase domain in the interval Gly75 to Arg214. Mg(2+) is bound at residue Ala115. The Nudix box motif lies at Gly116–Gly137. Leu117 is a binding site for substrate. Mg(2+) contacts are provided by Glu131 and Glu135. A substrate-binding site is contributed by Asp152. Mg(2+) is bound at residue Glu185.

It belongs to the Nudix hydrolase family. NudF subfamily. Requires Mg(2+) as cofactor. The cofactor is Mn(2+).

It catalyses the reaction ADP-D-ribose + H2O = D-ribose 5-phosphate + AMP + 2 H(+). The chain is ADP-ribose pyrophosphatase (YSA1) from Saccharomyces cerevisiae (strain ATCC 204508 / S288c) (Baker's yeast).